Here is a 517-residue protein sequence, read N- to C-terminus: Dopamine receptor 4 (517 aa).

Residues 1 to 46 (MLAYGSDPNAEDLYITMTPSVSTENDTTVWATEEPAAIVWRHPLLA) are Extracellular-facing. Asn25 carries an N-linked (GlcNAc...) asparagine glycan. A helical membrane pass occupies residues 47-67 (IALFSICLLTVAGNCLVVIAV). Topologically, residues 68-77 (CTKKYLRNPT) are cytoplasmic. Residues 78–98 (GYLIISLAIADLIVGVIVMPM) form a helical membrane-spanning segment. The Extracellular segment spans residues 99–108 (NSLFEIANHT). Asn106 carries an N-linked (GlcNAc...) asparagine glycan. The chain crosses the membrane as a helical span at residues 109–129 (WLFGLMMCDVFHAMDILASTA). The Cytoplasmic portion of the chain corresponds to 130–159 (SIWNLCVISLDRYMAGQDPIGYRDKVSKRR). The chain crosses the membrane as a helical span at residues 160 to 180 (ILMAILSVWVLSAILSFPGII). The Extracellular segment spans residues 181–209 (WWRTSSPHLYEDQSQCLFTDSKMYVSFSS). The chain crosses the membrane as a helical span at residues 210-230 (LVSFYIPLFLILFAYGKVYII). The Cytoplasmic portion of the chain corresponds to 231 to 409 (ATRHSKGMRM…YVHEQRAART (179 aa)). A disordered region spans residues 309-339 (NDRGEHNNNNTVRQPLLRGTEGCHSDSISRS). Residues 410 to 430 (LSIVVGAFILCWTPFFVFTPL) traverse the membrane as a helical segment. At 431–442 (TAFCESCFSNKE) the chain is on the extracellular side. The chain crosses the membrane as a helical span at residues 443-463 (TIFTFVTWAGHLNSMLNPLIY). The Cytoplasmic portion of the chain corresponds to 464-517 (SRFSRDFRRAFKQILTCQRQQKVKTAFKTPLSLVFTQLISVTQMWEQPPNTSIE).

Belongs to the G-protein coupled receptor 1 family. As to expression, expressed in pharyngeal neurons I1 and I2, neurons ASG, AVL, CAN, PQR, vulva, intestine, rectal glands and rectal epithelial glands. Also expressed in neurons in ray 8 in males.

The protein localises to the cell membrane. Its function is as follows. Receptor for dopamine. The activity of this receptor is mediated by G proteins which activate adenylyl cyclase. In terms of antagonist responses, would be classed with the D1-like dopamine receptor group. This is Dopamine receptor 4 (dop-4) from Caenorhabditis elegans.